A 195-amino-acid chain; its full sequence is Rubrerythrin-1 (195 aa).

The region spanning 3-150 is the Ferritin-like diiron domain; sequence SLKGTKTAEN…ALLKNIEENK (148 aa). The Fe(3+) site is built by glutamate 20, glutamate 53, glutamate 98, glutamate 101, glutamate 132, histidine 135, cysteine 162, cysteine 165, cysteine 178, and cysteine 181. In terms of domain architecture, Rubredoxin-like spans 157–191; sequence VKFWKCIKCGYIFEGKTAPKVCPACLHPQAYFEIL.

As to quaternary structure, homodimer. Requires Fe(3+) as cofactor.

The catalysed reaction is H2O2 + NADH + H(+) = NAD(+) + 2 H2O. Its activity is regulated as follows. Rubredoxin (Rd) increases the NADH consumption rate by serving as an intermediary electron-transfer shuttle between NROR and RubY. Its function is as follows. Functions as the terminal component of an NADH peroxidase (NADH:H(2)O(2) oxidoreductase) when using NADH:rubredoxin oxidoreductase (NROR) as the electron transport intermediary from NADH to RubY. The chain is Rubrerythrin-1 (rbr1) from Clostridium acetobutylicum (strain ATCC 824 / DSM 792 / JCM 1419 / IAM 19013 / LMG 5710 / NBRC 13948 / NRRL B-527 / VKM B-1787 / 2291 / W).